The following is a 238-amino-acid chain: Lactate utilization protein A (238 aa).

It belongs to the LutA/YkgE family.

Its function is as follows. Is involved in L-lactate degradation and allows cells to grow with lactate as the sole carbon source. The polypeptide is Lactate utilization protein A (Bacillus licheniformis (strain ATCC 14580 / DSM 13 / JCM 2505 / CCUG 7422 / NBRC 12200 / NCIMB 9375 / NCTC 10341 / NRRL NRS-1264 / Gibson 46)).